The following is a 398-amino-acid chain: Elongation factor Tu (398 aa).

The region spanning 10 to 208 (KPHVNVGTIG…ALDDYIPEPE (199 aa)) is the tr-type G domain. The G1 stretch occupies residues 19–26 (GHVDHGKT). Position 19-26 (19-26 (GHVDHGKT)) interacts with GTP. Threonine 26 serves as a coordination point for Mg(2+). Residues 61 to 65 (GITIA) are G2. Positions 82–85 (DCPG) are G3. GTP-binding positions include 82–86 (DCPGH) and 137–140 (NKAD). Positions 137-140 (NKAD) are G4. The segment at 175–177 (SAL) is G5.

This sequence belongs to the TRAFAC class translation factor GTPase superfamily. Classic translation factor GTPase family. EF-Tu/EF-1A subfamily. As to quaternary structure, monomer.

The protein localises to the cytoplasm. The enzyme catalyses GTP + H2O = GDP + phosphate + H(+). In terms of biological role, GTP hydrolase that promotes the GTP-dependent binding of aminoacyl-tRNA to the A-site of ribosomes during protein biosynthesis. The sequence is that of Elongation factor Tu from Marinobacter nauticus (strain ATCC 700491 / DSM 11845 / VT8) (Marinobacter aquaeolei).